The sequence spans 140 residues: Large-conductance mechanosensitive channel (140 aa).

The next 3 membrane-spanning stretches (helical) occupy residues 7-27 (EFAF…GAAF), 30-50 (IITS…FGTV), and 64-84 (GLFV…FLFV).

Belongs to the MscL family. Homopentamer.

It localises to the cell membrane. In terms of biological role, channel that opens in response to stretch forces in the membrane lipid bilayer. May participate in the regulation of osmotic pressure changes within the cell. This chain is Large-conductance mechanosensitive channel, found in Staphylococcus carnosus (strain TM300).